Consider the following 775-residue polypeptide: Tyrosine-protein phosphatase non-receptor type 12 (775 aa).

M1 is subject to N-acetylmethionine. Position 19 is a phosphoserine (S19). A Tyrosine-protein phosphatase domain is found at 28 to 293 (FARDFMRLRR…ELVHRAIAQL (266 aa)). Substrate-binding positions include D199, 231 to 237 (CSAGCGR), and Q278. The active-site Phosphocysteine intermediate is the C231. Residues 322–341 (SSIDSEKQDSPPPKPPRTRS) are disordered. S331, S434, S448, and S467 each carry phosphoserine. An interaction with TGFB1I1 region spans residues 344-437 (VEGDAKEEIL…KLERNLSFEI (94 aa)). Positions 462–775 (KIKSASSSVV…GPREPPSEWT (314 aa)) are disordered. At T519 the chain carries Phosphothreonine. S550 and S567 each carry phosphoserine. Residues 558–573 (NHSQTLKTVSSTPNST) show a composition bias toward polar residues. Position 569 is a phosphothreonine (T569). Position 596 is a phosphoserine (S596). Phosphothreonine is present on T598. Residues S603, S606, S608, and S613 each carry the phosphoserine modification. Residues 622-640 (TSISTASATVSPASSAESA) show a composition bias toward low complexity. Position 673 is a phosphoserine (S673). The segment covering 692–711 (VRPEWHELPNQEWSEQRESE) has biased composition (basic and acidic residues). S748 is modified (phosphoserine). The segment covering 766 to 775 (GPREPPSEWT) has biased composition (basic and acidic residues).

This sequence belongs to the protein-tyrosine phosphatase family. Non-receptor class 4 subfamily. Interacts with PSTPIP1 and TGFB1I1. Interacts with PTK2B/PYK2. Interacts with LPXN. Interacts with SORBS2; this interaction greatly enhances WASF1 dephosphorylation and might mediate partial translocation to focal adhesion sites. Post-translationally, phosphorylated by STK24/MST3 and this results in inhibition of its activity.

The protein resides in the cytoplasm. The protein localises to the cell junction. It localises to the focal adhesion. It is found in the cell projection. Its subcellular location is the podosome. The catalysed reaction is O-phospho-L-tyrosyl-[protein] + H2O = L-tyrosyl-[protein] + phosphate. Functionally, dephosphorylates a range of proteins, and thereby regulates cellular signaling cascades. Dephosphorylates cellular tyrosine kinases, such as ERBB2 and PTK2B/PYK2, and thereby regulates signaling via ERBB2 and PTK2B/PYK2. Selectively dephosphorylates ERBB2 phosphorylated at 'Tyr-1112', 'Tyr-1196', and/or 'Tyr-1248'. The polypeptide is Tyrosine-protein phosphatase non-receptor type 12 (Ptpn12) (Mus musculus (Mouse)).